The primary structure comprises 358 residues: Membrane-bound lytic murein transglycosylase C (358 aa).

A signal peptide spans 1-16 (MKKILALLVIAPLLVS). C17 carries N-palmitoyl cysteine lipidation. C17 carries S-diacylglycerol cysteine lipidation.

The protein belongs to the transglycosylase Slt family.

It is found in the cell outer membrane. The enzyme catalyses Exolytic cleavage of the (1-&gt;4)-beta-glycosidic linkage between N-acetylmuramic acid (MurNAc) and N-acetylglucosamine (GlcNAc) residues in peptidoglycan, from either the reducing or the non-reducing ends of the peptidoglycan chains, with concomitant formation of a 1,6-anhydrobond in the MurNAc residue.. In terms of biological role, murein-degrading enzyme. May play a role in recycling of muropeptides during cell elongation and/or cell division. The sequence is that of Membrane-bound lytic murein transglycosylase C from Yersinia enterocolitica serotype O:8 / biotype 1B (strain NCTC 13174 / 8081).